Consider the following 204-residue polypeptide: FMN-dependent NADH:quinone oxidoreductase (204 aa).

Residues Ser-10 and 16–18 (SKS) each bind FMN.

It belongs to the azoreductase type 1 family. Homodimer. Requires FMN as cofactor.

The enzyme catalyses 2 a quinone + NADH + H(+) = 2 a 1,4-benzosemiquinone + NAD(+). The catalysed reaction is N,N-dimethyl-1,4-phenylenediamine + anthranilate + 2 NAD(+) = 2-(4-dimethylaminophenyl)diazenylbenzoate + 2 NADH + 2 H(+). Quinone reductase that provides resistance to thiol-specific stress caused by electrophilic quinones. In terms of biological role, also exhibits azoreductase activity. Catalyzes the reductive cleavage of the azo bond in aromatic azo compounds to the corresponding amines. This Ruegeria pomeroyi (strain ATCC 700808 / DSM 15171 / DSS-3) (Silicibacter pomeroyi) protein is FMN-dependent NADH:quinone oxidoreductase.